Reading from the N-terminus, the 132-residue chain is Small ribosomal subunit protein uS9 (132 aa).

Positions 104 to 132 are disordered; the sequence is GYLTRDPRMKERKKYGLRKARRAPQFSKR. Residues 113–132 show a composition bias toward basic residues; sequence KERKKYGLRKARRAPQFSKR.

It belongs to the universal ribosomal protein uS9 family.

In Natranaerobius thermophilus (strain ATCC BAA-1301 / DSM 18059 / JW/NM-WN-LF), this protein is Small ribosomal subunit protein uS9.